We begin with the raw amino-acid sequence, 166 residues long: MKNPEEAADGKQRIHLRPGSLRGAAPAKLHLLPCDVLVSRPAPVDRFFTPAVRHDADGLQASFRGRGLRGEEVAVPPGFAGFVMVTEEKGEGLIGKLNFSGDAEDKADEAQEPLERDFDRLIGATGSFSHFTLWGLETVPGPDAKVHRALGWPSLAAAIHAQVPED.

The residue at position 1 (methionine 1) is an N-acetylmethionine.

This sequence belongs to the RNase H2 subunit C family. As to quaternary structure, the RNase H2 complex is a heterotrimer composed of the catalytic subunit RNASEH2A and the non-catalytic subunits RNASEH2B and RNASEH2C.

It localises to the nucleus. Functionally, non catalytic subunit of RNase H2, an endonuclease that specifically degrades the RNA of RNA:DNA hybrids. Participates in DNA replication, possibly by mediating the removal of lagging-strand Okazaki fragment RNA primers during DNA replication. Mediates the excision of single ribonucleotides from DNA:RNA duplexes. The sequence is that of Ribonuclease H2 subunit C (Rnaseh2c) from Mus musculus (Mouse).